The chain runs to 216 residues: Probable nicotinate-nucleotide adenylyltransferase (216 aa).

The protein belongs to the NadD family.

The catalysed reaction is nicotinate beta-D-ribonucleotide + ATP + H(+) = deamido-NAD(+) + diphosphate. It functions in the pathway cofactor biosynthesis; NAD(+) biosynthesis; deamido-NAD(+) from nicotinate D-ribonucleotide: step 1/1. Catalyzes the reversible adenylation of nicotinate mononucleotide (NaMN) to nicotinic acid adenine dinucleotide (NaAD). The chain is Probable nicotinate-nucleotide adenylyltransferase from Citrifermentans bemidjiense (strain ATCC BAA-1014 / DSM 16622 / JCM 12645 / Bem) (Geobacter bemidjiensis).